Reading from the N-terminus, the 271-residue chain is Phthiotriol/phenolphthiotriol dimycocerosates methyltransferase 1 (271 aa).

The protein belongs to the methyltransferase superfamily. Phthiotriol/phenolphthiotriol dimycocerosates methyltransferase family.

In terms of biological role, catalyzes the methylation of the lipid moiety of the intermediate compounds phthiotriol and glycosylated phenolphthiotriol dimycoserosates to form phthiocerol dimycocerosates (DIM A) and glycosylated phenolphthiocerol dimycocerosates (PGL). The sequence is that of Phthiotriol/phenolphthiotriol dimycocerosates methyltransferase 1 from Mycobacterium ulcerans (strain Agy99).